We begin with the raw amino-acid sequence, 642 residues long: Regulator of MON1-CCZ1 complex (642 aa).

The 155-residue stretch at 462-616 (RPYTESILML…KLYETLSFPK (155 aa)) folds into the Mic1 domain.

It belongs to the RMC1 family. As to quaternary structure, component of the Mon1-Ccz1 guanyl-nucleotide exchange factor complex made up of Mon1, Ccz1 and Bulli; the interaction of Bulli with the Mon1-Ccz1 heterodimer is mediated via the C-terminal Mic1 domain of Bulli. Mon1 and Ccz1 form a stable complex which displays Rab7 GEF activity with or without Bulli; GEF activity is enhanced by Bulli possibly by improving membrane association of the complex.

The protein localises to the late endosome. In terms of biological role, positive regulator of the Rab7 guanyl-nucleotide exchange activity of the Mon1-Ccz1 complex, possibly by enhancing its endosomal membrane association. As part of the Mon1-Ccz1 complex involved in endolysosomal biogenesis possibly by mediating Rab conversion, the replacement of Rab5 with Rab7 during late endosome maturation. This Drosophila melanogaster (Fruit fly) protein is Regulator of MON1-CCZ1 complex.